The sequence spans 338 residues: UDP-3-O-acylglucosamine N-acyltransferase (338 aa).

Histidine 251 functions as the Proton acceptor in the catalytic mechanism.

The protein belongs to the transferase hexapeptide repeat family. LpxD subfamily. As to quaternary structure, homotrimer.

It catalyses the reaction a UDP-3-O-[(3R)-3-hydroxyacyl]-alpha-D-glucosamine + a (3R)-hydroxyacyl-[ACP] = a UDP-2-N,3-O-bis[(3R)-3-hydroxyacyl]-alpha-D-glucosamine + holo-[ACP] + H(+). Its pathway is bacterial outer membrane biogenesis; LPS lipid A biosynthesis. Its function is as follows. Catalyzes the N-acylation of UDP-3-O-acylglucosamine using 3-hydroxyacyl-ACP as the acyl donor. Is involved in the biosynthesis of lipid A, a phosphorylated glycolipid that anchors the lipopolysaccharide to the outer membrane of the cell. The protein is UDP-3-O-acylglucosamine N-acyltransferase of Psychrobacter arcticus (strain DSM 17307 / VKM B-2377 / 273-4).